The following is a 961-amino-acid chain: Glycine dehydrogenase (decarboxylating) (961 aa).

K702 is subject to N6-(pyridoxal phosphate)lysine.

It belongs to the GcvP family. As to quaternary structure, the glycine cleavage system is composed of four proteins: P, T, L and H. Pyridoxal 5'-phosphate is required as a cofactor.

The catalysed reaction is N(6)-[(R)-lipoyl]-L-lysyl-[glycine-cleavage complex H protein] + glycine + H(+) = N(6)-[(R)-S(8)-aminomethyldihydrolipoyl]-L-lysyl-[glycine-cleavage complex H protein] + CO2. Its function is as follows. The glycine cleavage system catalyzes the degradation of glycine. The P protein binds the alpha-amino group of glycine through its pyridoxal phosphate cofactor; CO(2) is released and the remaining methylamine moiety is then transferred to the lipoamide cofactor of the H protein. This is Glycine dehydrogenase (decarboxylating) from Rhodopseudomonas palustris (strain BisA53).